The sequence spans 91 residues: DNA-binding protein HU (91 aa).

It belongs to the bacterial histone-like protein family.

Functionally, histone-like DNA-binding protein which is capable of wrapping DNA to stabilize it, and thus to prevent its denaturation under extreme environmental conditions. Also seems to act as a fortuitous virulence factor in delayed sequelae by binding to heparan sulfate-proteoglycans in the extracellular matrix of target organs and acting as a nidus for in situ immune complex formation. The chain is DNA-binding protein HU (hup) from Streptococcus downei (Streptococcus sobrinus).